We begin with the raw amino-acid sequence, 394 residues long: Elongation factor Tu 1 (394 aa).

One can recognise a tr-type G domain in the interval Lys-10–Glu-204. Residues Gly-19–Thr-26 form a G1 region. A GTP-binding site is contributed by Gly-19–Thr-26. Thr-26 provides a ligand contact to Mg(2+). The interval Gly-60–Asn-64 is G2. Positions Asp-81–Gly-84 are G3. GTP contacts are provided by residues Asp-81–His-85 and Asn-136–Asp-139. The interval Asn-136–Asp-139 is G4. The segment at Ser-174–Leu-176 is G5.

The protein belongs to the TRAFAC class translation factor GTPase superfamily. Classic translation factor GTPase family. EF-Tu/EF-1A subfamily. In terms of assembly, monomer.

The protein resides in the cytoplasm. It carries out the reaction GTP + H2O = GDP + phosphate + H(+). In terms of biological role, GTP hydrolase that promotes the GTP-dependent binding of aminoacyl-tRNA to the A-site of ribosomes during protein biosynthesis. This is Elongation factor Tu 1 from Yersinia enterocolitica serotype O:8 / biotype 1B (strain NCTC 13174 / 8081).